Here is a 342-residue protein sequence, read N- to C-terminus: Transmembrane protein 59-like (342 aa).

The signal sequence occupies residues 1–24 (MAAVALMPPPLLLLLLLASPPAAS). N97 carries an N-linked (GlcNAc...) asparagine glycan. Residues 268–290 (WILACCLFLSVLVMLWLSCSTLV) form a helical membrane-spanning segment. Residues 340-342 (TKL) carry the Microbody targeting signal motif.

The protein belongs to the TMEM59 family. As to expression, expressed preferentially at high level in the brain.

Its subcellular location is the golgi apparatus membrane. Functionally, modulates the O-glycosylation and complex N-glycosylation steps occurring during the Golgi maturation of APP. Inhibits APP transport to the cell surface and further shedding. The sequence is that of Transmembrane protein 59-like (TMEM59L) from Homo sapiens (Human).